A 79-amino-acid chain; its full sequence is Acyl carrier protein (79 aa).

A Carrier domain is found at 2–77 (SEVADKVKKI…DAVEYIEKQK (76 aa)). Ser-37 bears the O-(pantetheine 4'-phosphoryl)serine mark.

This sequence belongs to the acyl carrier protein (ACP) family. Post-translationally, 4'-phosphopantetheine is transferred from CoA to a specific serine of apo-ACP by AcpS. This modification is essential for activity because fatty acids are bound in thioester linkage to the sulfhydryl of the prosthetic group.

It localises to the cytoplasm. It participates in lipid metabolism; fatty acid biosynthesis. Carrier of the growing fatty acid chain in fatty acid biosynthesis. The sequence is that of Acyl carrier protein from Granulibacter bethesdensis (strain ATCC BAA-1260 / CGDNIH1).